The following is a 356-amino-acid chain: tRNA N6-adenosine threonylcarbamoyltransferase (356 aa).

Positions 110 and 114 each coordinate Fe cation. Substrate-binding positions include 133 to 137 (LVSGG), aspartate 166, glycine 179, and asparagine 276. Fe cation is bound at residue aspartate 304.

This sequence belongs to the KAE1 / TsaD family. It depends on Fe(2+) as a cofactor.

It is found in the cytoplasm. It catalyses the reaction L-threonylcarbamoyladenylate + adenosine(37) in tRNA = N(6)-L-threonylcarbamoyladenosine(37) in tRNA + AMP + H(+). In terms of biological role, required for the formation of a threonylcarbamoyl group on adenosine at position 37 (t(6)A37) in tRNAs that read codons beginning with adenine. Is involved in the transfer of the threonylcarbamoyl moiety of threonylcarbamoyl-AMP (TC-AMP) to the N6 group of A37, together with TsaE and TsaB. TsaD likely plays a direct catalytic role in this reaction. In Teredinibacter turnerae (strain ATCC 39867 / T7901), this protein is tRNA N6-adenosine threonylcarbamoyltransferase.